A 960-amino-acid polypeptide reads, in one-letter code: RasGEF domain-containing serine/threonine-protein kinase X (960 aa).

In terms of domain architecture, Protein kinase spans 21–274 (LEFNEKIGKG…FDEILSQLKV (254 aa)). ATP is bound by residues 27–35 (IGKGSFGSV) and Lys48. The active-site Proton acceptor is Asp140. The span at 314–368 (NISFSPNNSNNNNNNNNNISNISPDITTGIQQINLSSSGGSNNSSPSTPPQGSQL) shows a compositional bias: low complexity. Disordered regions lie at residues 314–372 (NISF…VSLA) and 393–413 (GQLS…HKPS). The 129-residue stretch at 437–565 (PCYAALTSHI…LGTTISNNEL (129 aa)) folds into the N-terminal Ras-GEF domain. The disordered stretch occupies residues 596–651 (NNNNNNNNNPVNNINNINNNNSVNSSSSNNNNNNNNNNSNNNNNNNNNNNNNNNNN). Residues 712-957 (HSTELARQIT…KNNSLKCEPP (246 aa)) form the Ras-GEF domain.

The protein belongs to the protein kinase superfamily. TKL Ser/Thr protein kinase family.

It catalyses the reaction L-seryl-[protein] + ATP = O-phospho-L-seryl-[protein] + ADP + H(+). It carries out the reaction L-threonyl-[protein] + ATP = O-phospho-L-threonyl-[protein] + ADP + H(+). Functionally, promotes the exchange of Ras-bound GDP by GTP. The sequence is that of RasGEF domain-containing serine/threonine-protein kinase X (gefX) from Dictyostelium discoideum (Social amoeba).